The chain runs to 542 residues: Chaperonin GroEL (542 aa).

ATP-binding positions include 29 to 32, 86 to 90, glycine 413, 476 to 478, and aspartate 492; these read TMGP, DGTTT, and NAA. Residues 521-542 are disordered; that stretch reads KPDPNANNQAPAAPQGGMGGMM. The segment covering 524 to 535 has biased composition (low complexity); sequence PNANNQAPAAPQ.

This sequence belongs to the chaperonin (HSP60) family. Forms a cylinder of 14 subunits composed of two heptameric rings stacked back-to-back. Interacts with the co-chaperonin GroES.

The protein resides in the cytoplasm. The enzyme catalyses ATP + H2O + a folded polypeptide = ADP + phosphate + an unfolded polypeptide.. Functionally, together with its co-chaperonin GroES, plays an essential role in assisting protein folding. The GroEL-GroES system forms a nano-cage that allows encapsulation of the non-native substrate proteins and provides a physical environment optimized to promote and accelerate protein folding. The polypeptide is Chaperonin GroEL (Limosilactobacillus reuteri subsp. reuteri (strain JCM 1112) (Lactobacillus reuteri)).